Consider the following 518-residue polypeptide: Prosaposin (518 aa).

Positions 1–17 (MARRLLTLLGLLAAAVA) are cleaved as a signal peptide. The propeptide occupies 18-60 (SPVLWQKDCAKGPEVWCQSLRTASQCGAVKHCQQNVWSKPAVN). One can recognise a Saposin A-type 1 domain in the interval 19–59 (PVLWQKDCAKGPEVWCQSLRTASQCGAVKHCQQNVWSKPAV). 4 Saposin B-type domains span residues 60–143 (NSIP…QSLQ), 193–277 (TEDV…PSVK), 307–388 (TFSV…AANK), and 399–480 (AGGF…GAAK). 3 disulfides stabilise this stretch: Cys64/Cys139, Cys67/Cys133, and Cys95/Cys107. N-linked (GlcNAc...) asparagine glycosylation is present at Asn81. Positions 144–193 (KHLAAMKLQKQLQSNKIPELDFSELTSPFMANVPLLLYPQDKPKQKSKAT) are excised as a propeptide. Disulfide bonds link Cys197–Cys273, Cys200–Cys267, and Cys229–Cys240. N-linked (GlcNAc...) asparagine glycosylation is present at Asn214. Positions 277–306 (KSVPLQTLVPAQVVHEVKMETVEKATVQEK) are excised as a propeptide. Intrachain disulfides connect Cys311–Cys384, Cys314–Cys378, and Cys342–Cys353. Residue Asn328 is glycosylated (N-linked (GlcNAc...) asparagine). A propeptide spanning residues 388–398 (KPPQQPVVVKP) is cleaved from the precursor. 3 disulfides stabilise this stretch: Cys403-Cys476, Cys406-Cys470, and Cys434-Cys445. The N-linked (GlcNAc...) asparagine glycan is linked to Asn420. Positions 480–518 (KKPLLGEDACVWGPGYWCKNMETAAQCNAVDHCRRHVWN) are excised as a propeptide. Residues 482 to 518 (PLLGEDACVWGPGYWCKNMETAAQCNAVDHCRRHVWN) enclose the Saposin A-type 2 domain.

Saposin-B is a homodimer. In terms of processing, this precursor is proteolytically processed to 4 small peptides, which are similar to each other and are sphingolipid hydrolase activator proteins.

It is found in the lysosome. It localises to the secreted. The lysosomal degradation of sphingolipids takes place by the sequential action of specific hydrolases. Some of these enzymes require specific low-molecular mass, non-enzymatic proteins: the sphingolipids activator proteins (coproteins). In terms of biological role, saposin-A and saposin-C stimulate the hydrolysis of glucosylceramide by beta-glucosylceramidase (EC 3.2.1.45) and galactosylceramide by beta-galactosylceramidase (EC 3.2.1.46). Saposin-C apparently acts by combining with the enzyme and acidic lipid to form an activated complex, rather than by solubilizing the substrate. Functionally, saposin-B stimulates the hydrolysis of galacto-cerebroside sulfate by arylsulfatase A (EC 3.1.6.8), GM1 gangliosides by beta-galactosidase (EC 3.2.1.23) and globotriaosylceramide by alpha-galactosidase A (EC 3.2.1.22). Saposin-B forms a solubilizing complex with the substrates of the sphingolipid hydrolases. Its function is as follows. Saposin-D is a specific sphingomyelin phosphodiesterase activator (EC 3.1.4.12). The protein is Prosaposin (PSAP) of Gallus gallus (Chicken).